Consider the following 175-residue polypeptide: Ribulose bisphosphate carboxylase small subunit, chloroplastic 2 (175 aa).

Residues 1 to 46 (MAPTVMASSATSVAPFQGLKSTAGLPVSRRSTNSGFGNVSNGGRIK) constitute a chloroplast transit peptide.

The protein belongs to the RuBisCO small chain family. Heterohexadecamer of 8 large and 8 small subunits.

The protein resides in the plastid. It localises to the chloroplast. Its function is as follows. RuBisCO catalyzes two reactions: the carboxylation of D-ribulose 1,5-bisphosphate, the primary event in carbon dioxide fixation, as well as the oxidative fragmentation of the pentose substrate. Both reactions occur simultaneously and in competition at the same active site. Although the small subunit is not catalytic it is essential for maximal activity. In Oryza sativa subsp. japonica (Rice), this protein is Ribulose bisphosphate carboxylase small subunit, chloroplastic 2.